Consider the following 193-residue polypeptide: Holliday junction branch migration complex subunit RuvA (193 aa).

Residues 1 to 63 form a domain I region; sequence MIHHLKGQLI…EDSHTLYGFA (63 aa). The segment at 64 to 142 is domain II; it reads EKSEREIFRL…KVLGDDEVFV (79 aa). Residues 143-145 form a flexible linker region; the sequence is SQS. The interval 145-193 is domain III; that stretch reads SNTNKEEALSALEILGYNRRQAGKVVEKILKEDPESTVESIIKMALKKL.

Belongs to the RuvA family. Homotetramer. Forms an RuvA(8)-RuvB(12)-Holliday junction (HJ) complex. HJ DNA is sandwiched between 2 RuvA tetramers; dsDNA enters through RuvA and exits via RuvB. An RuvB hexamer assembles on each DNA strand where it exits the tetramer. Each RuvB hexamer is contacted by two RuvA subunits (via domain III) on 2 adjacent RuvB subunits; this complex drives branch migration. In the full resolvosome a probable DNA-RuvA(4)-RuvB(12)-RuvC(2) complex forms which resolves the HJ.

Its subcellular location is the cytoplasm. The RuvA-RuvB-RuvC complex processes Holliday junction (HJ) DNA during genetic recombination and DNA repair, while the RuvA-RuvB complex plays an important role in the rescue of blocked DNA replication forks via replication fork reversal (RFR). RuvA specifically binds to HJ cruciform DNA, conferring on it an open structure. The RuvB hexamer acts as an ATP-dependent pump, pulling dsDNA into and through the RuvAB complex. HJ branch migration allows RuvC to scan DNA until it finds its consensus sequence, where it cleaves and resolves the cruciform DNA. The sequence is that of Holliday junction branch migration complex subunit RuvA from Christiangramia forsetii (strain DSM 17595 / CGMCC 1.15422 / KT0803) (Gramella forsetii).